Here is a 139-residue protein sequence, read N- to C-terminus: Self-incompatibility protein S1 (139 aa).

An N-terminal signal peptide occupies residues 1–19 (MNIFYVIVLLSFFLSKSSG). An N-linked (GlcNAc...) asparagine glycan is attached at Asn51.

This sequence belongs to the plant self-incompatibility (S1) protein family. Glycosylated (S1b) and unglocosylated (S1a) forms coexist. As to expression, accumulates in the stigma (at protein level).

The protein localises to the secreted. Functionally, exhibits specific pollen self-inhibitory activity thus preventing self-fertilization. This is Self-incompatibility protein S1 from Papaver rhoeas (Common poppy).